A 516-amino-acid polypeptide reads, in one-letter code: Cytochrome P450 1A1 (516 aa).

A mitochondrial targeting signal region spans residues 33 to 44 (WQPRVPKGLKSP). Ser-71 carries O-linked (GlcNAc) serine glycosylation. Phe-228 contributes to the substrate binding site. Position 461 (Cys-461) interacts with heme.

This sequence belongs to the cytochrome P450 family. As to quaternary structure, interacts with cytosolic chaperones HSP70 and HSP90; this interaction is required for initial targeting to mitochondria. Interacts (via mitochondrial targeting signal) with TOMM40 (via N-terminus); this interaction is required for translocation across the mitochondrial outer membrane. It depends on heme as a cofactor.

The protein localises to the endoplasmic reticulum membrane. The protein resides in the mitochondrion inner membrane. It is found in the microsome membrane. Its subcellular location is the cytoplasm. It carries out the reaction an organic molecule + reduced [NADPH--hemoprotein reductase] + O2 = an alcohol + oxidized [NADPH--hemoprotein reductase] + H2O + H(+). The enzyme catalyses estrone + reduced [NADPH--hemoprotein reductase] + O2 = 2-hydroxyestrone + oxidized [NADPH--hemoprotein reductase] + H2O + H(+). It catalyses the reaction estrone + reduced [NADPH--hemoprotein reductase] + O2 = 4-hydroxyestrone + oxidized [NADPH--hemoprotein reductase] + H2O + H(+). The catalysed reaction is estrone + reduced [NADPH--hemoprotein reductase] + O2 = 6alpha-hydroxyestrone + oxidized [NADPH--hemoprotein reductase] + H2O + H(+). It carries out the reaction estrone + reduced [NADPH--hemoprotein reductase] + O2 = 15alpha-hydroxyestrone + oxidized [NADPH--hemoprotein reductase] + H2O + H(+). The enzyme catalyses estrone + reduced [NADPH--hemoprotein reductase] + O2 = 16alpha-hydroxyestrone + oxidized [NADPH--hemoprotein reductase] + H2O + H(+). It catalyses the reaction 17beta-estradiol + reduced [NADPH--hemoprotein reductase] + O2 = 2-hydroxy-17beta-estradiol + oxidized [NADPH--hemoprotein reductase] + H2O + H(+). The catalysed reaction is 17beta-estradiol + reduced [NADPH--hemoprotein reductase] + O2 = 4-hydroxy-17beta-estradiol + oxidized [NADPH--hemoprotein reductase] + H2O + H(+). It carries out the reaction 17beta-estradiol + reduced [NADPH--hemoprotein reductase] + O2 = 6alpha-hydroxy-17beta-estradiol + oxidized [NADPH--hemoprotein reductase] + H2O + H(+). The enzyme catalyses 17beta-estradiol + reduced [NADPH--hemoprotein reductase] + O2 = 7alpha-hydroxy-17beta-estradiol + oxidized [NADPH--hemoprotein reductase] + H2O + H(+). It catalyses the reaction 17beta-estradiol + reduced [NADPH--hemoprotein reductase] + O2 = 15alpha-hydroxy-17beta-estradiol + oxidized [NADPH--hemoprotein reductase] + H2O + H(+). The catalysed reaction is (5Z,8Z,11Z)-eicosatrienoate + reduced [NADPH--hemoprotein reductase] + O2 = 19-hydroxy-(5Z,8Z,11Z)-eicosatrienoate + oxidized [NADPH--hemoprotein reductase] + H2O + H(+). It carries out the reaction (5Z,8Z,11Z,14Z)-eicosatetraenoate + reduced [NADPH--hemoprotein reductase] + O2 = 16-hydroxy-(5Z,8Z,11Z,14Z)-eicosatetraenoate + oxidized [NADPH--hemoprotein reductase] + H2O + H(+). The enzyme catalyses (5Z,8Z,11Z,14Z)-eicosatetraenoate + reduced [NADPH--hemoprotein reductase] + O2 = 17-hydroxy-(5Z,8Z,11Z,14Z)-eicosatetraenoate + oxidized [NADPH--hemoprotein reductase] + H2O + H(+). It catalyses the reaction (5Z,8Z,11Z,14Z)-eicosatetraenoate + reduced [NADPH--hemoprotein reductase] + O2 = 18-hydroxy-(5Z,8Z,11Z,14Z)-eicosatetraenoate + oxidized [NADPH--hemoprotein reductase] + H2O + H(+). The catalysed reaction is (5Z,8Z,11Z,14Z)-eicosatetraenoate + reduced [NADPH--hemoprotein reductase] + O2 = 19-hydroxy-(5Z,8Z,11Z,14Z)-eicosatetraenoate + oxidized [NADPH--hemoprotein reductase] + H2O + H(+). It carries out the reaction (5Z,8Z,11Z,14Z,17Z)-eicosapentaenoate + reduced [NADPH--hemoprotein reductase] + O2 = 19-hydroxy-(5Z,8Z,11Z,14Z,17Z)-eicosapentaenoate + oxidized [NADPH--hemoprotein reductase] + H2O + H(+). The enzyme catalyses (5Z,8Z,11Z,14Z)-eicosatetraenoate + reduced [NADPH--hemoprotein reductase] + O2 = (8R,9S)-epoxy-(5Z,11Z,14Z)-eicosatrienoate + oxidized [NADPH--hemoprotein reductase] + H2O + H(+). It catalyses the reaction (5Z,8Z,11Z,14Z)-eicosatetraenoate + reduced [NADPH--hemoprotein reductase] + O2 = (11R,12S)-epoxy-(5Z,8Z,14Z)-eicosatrienoate + oxidized [NADPH--hemoprotein reductase] + H2O + H(+). The catalysed reaction is (5Z,8Z,11Z,14Z)-eicosatetraenoate + reduced [NADPH--hemoprotein reductase] + O2 = (14S,15R)-epoxy-(5Z,8Z,11Z)-eicosatrienoate + oxidized [NADPH--hemoprotein reductase] + H2O + H(+). It carries out the reaction (5Z,8Z,11Z,14Z)-eicosatetraenoate + reduced [NADPH--hemoprotein reductase] + O2 = (14R,15S)-epoxy-(5Z,8Z,11Z)-eicosatrienoate + oxidized [NADPH--hemoprotein reductase] + H2O + H(+). The enzyme catalyses (5Z,8Z,11Z,14Z,17Z)-eicosapentaenoate + reduced [NADPH--hemoprotein reductase] + O2 = (17R,18S)-epoxy-(5Z,8Z,11Z,14Z)-eicosatetraenoate + oxidized [NADPH--hemoprotein reductase] + H2O + H(+). It catalyses the reaction (4Z,7Z,10Z,13Z,16Z,19Z)-docosahexaenoate + reduced [NADPH--hemoprotein reductase] + O2 = (19S,20R)-epoxy-(4Z,7Z,10Z,13Z,16Z)-docosapentaenoate + oxidized [NADPH--hemoprotein reductase] + H2O + H(+). The catalysed reaction is (4Z,7Z,10Z,13Z,16Z,19Z)-docosahexaenoate + reduced [NADPH--hemoprotein reductase] + O2 = (19R,20S)-epoxy-(4Z,7Z,10Z,13Z,16Z)-docosapentaenoate + oxidized [NADPH--hemoprotein reductase] + H2O + H(+). It carries out the reaction all-trans-retinol + reduced [NADPH--hemoprotein reductase] + O2 = all-trans-retinal + oxidized [NADPH--hemoprotein reductase] + 2 H2O + H(+). The enzyme catalyses all-trans-retinal + reduced [NADPH--hemoprotein reductase] + O2 = all-trans-retinoate + oxidized [NADPH--hemoprotein reductase] + H2O + 2 H(+). It catalyses the reaction (13S)-hydroperoxy-(9Z,11E)-octadecadienoate = 13-oxo-(9Z,11E)-octadecadienoate + H2O. The catalysed reaction is (12S)-hydroperoxy-(5Z,8Z,10E,14Z)-eicosatetraenoate = 12-oxo-(5Z,8Z,10E,14Z)-eicosatetraenoate + H2O. It carries out the reaction (15S)-hydroperoxy-(5Z,8Z,11Z,13E)-eicosatetraenoate = 15-oxo-(5Z,8Z,11Z,13E)-eicosatetraenoate + H2O. The enzyme catalyses (5S)-hydroperoxy-(6E,8Z,11Z,14Z)-eicosatetraenoate = 5-oxo-(6E,8Z,11Z,14Z)-eicosatetraenoate + H2O. It participates in steroid hormone biosynthesis. The protein operates within lipid metabolism; fatty acid metabolism. It functions in the pathway cofactor metabolism; retinol metabolism. In terms of biological role, a cytochrome P450 monooxygenase involved in the metabolism of various endogenous substrates, including fatty acids, steroid hormones and vitamins. Mechanistically, uses molecular oxygen inserting one oxygen atom into a substrate, and reducing the second into a water molecule, with two electrons provided by NADPH via cytochrome P450 reductase (CPR; NADPH-ferrihemoprotein reductase). Catalyzes the hydroxylation of carbon-hydrogen bonds. Exhibits high catalytic activity for the formation of hydroxyestrogens from estrone (E1) and 17beta-estradiol (E2), namely 2-hydroxy E1 and E2, as well as D-ring hydroxylated E1 and E2 at the C15alpha and C16alpha positions. Displays different regioselectivities for polyunsaturated fatty acids (PUFA) hydroxylation. Catalyzes the epoxidation of double bonds of certain PUFA. Converts arachidonic acid toward epoxyeicosatrienoic acid (EET) regioisomers, 8,9-, 11,12-, and 14,15-EET, that function as lipid mediators in the vascular system. Displays an absolute stereoselectivity in the epoxidation of eicosapentaenoic acid (EPA) producing the 17(R),18(S) enantiomer. May play an important role in all-trans retinoic acid biosynthesis in extrahepatic tissues. Catalyzes two successive oxidative transformation of all-trans retinol to all-trans retinal and then to the active form all-trans retinoic acid. May also participate in eicosanoids metabolism by converting hydroperoxide species into oxo metabolites (lipoxygenase-like reaction, NADPH-independent). This Balaenoptera acutorostrata (Common minke whale) protein is Cytochrome P450 1A1 (CYP1A1).